We begin with the raw amino-acid sequence, 492 residues long: MKLKMNKACDIASISVLPPRRTGGSSGASASGSVAVAVASQPRSQPLSQSQQSFSQGASASLLHSQSQFSQVSLDDNLLTLLPSPTRDQRFGLHDDSSKRMSSLPASSASCAREESQLQLAKLPSNPVHRWNPSIADTRSGQVTNEDVERKFQHLASSVHKMGMVVDSVQSDVMQLNRAMKEASLDSGSIRQKIAVLESSLQQILKGQDDLKALFGSSTKHNPDQTSVLNSLGSKLNEISSTLATLQTQMQARQLQGDQTTVLNSNASKSNEISSTLATLQTQMQADIRQLRCDVFRVFTKEMEGVVRAIRSVNSRPAAMQMMADQSYQVPVSNGWTQINQTPVAAGRSPMNRAPVAAGRSRMNQLPETKVLSAHLVYPAKVTDLKPKVEQGKVKAAPQKPFASSYYRVAPKQEEVAIRKVNIQVPAKKAPVSIIIESDDDSEGRASCVILKTETGSKEWKVTKQGTEEGLEILRRARKRRRREMQSIVLAS.

Residues valine 166–aspartate 186 are a coiled coil. The short motif at lysine 479–arginine 483 is the Nuclear localization signal element.

In terms of assembly, interacts with CRC1. In terms of tissue distribution, expressed in reproductive organs, but not in vegetative organs.

It is found in the nucleus. Involved in spore formation. Plays an essential role in the establishment of homologous chromosome pairing in early meiosis. The protein is Protein PAIR1 (PAIR1) of Oryza sativa subsp. japonica (Rice).